The sequence spans 149 residues: Large ribosomal subunit protein bL9 (149 aa).

The protein belongs to the bacterial ribosomal protein bL9 family.

Its function is as follows. Binds to the 23S rRNA. In Salinibacter ruber (strain DSM 13855 / M31), this protein is Large ribosomal subunit protein bL9.